Consider the following 600-residue polypeptide: Methionine--tRNA ligase (600 aa).

The 'HIGH' region motif lies at Pro12–His22. Residues Cys144, Cys147, Cys157, and Cys160 each coordinate Zn(2+). Positions Lys351–Ser355 match the 'KMSKS' region motif. Ser354 provides a ligand contact to ATP.

Belongs to the class-I aminoacyl-tRNA synthetase family. MetG type 1 subfamily. Monomer. Requires Zn(2+) as cofactor.

The protein resides in the cytoplasm. It carries out the reaction tRNA(Met) + L-methionine + ATP = L-methionyl-tRNA(Met) + AMP + diphosphate. Functionally, is required not only for elongation of protein synthesis but also for the initiation of all mRNA translation through initiator tRNA(fMet) aminoacylation. The chain is Methionine--tRNA ligase from Chloroflexus aggregans (strain MD-66 / DSM 9485).